A 355-amino-acid chain; its full sequence is Alanine racemase (355 aa).

The Proton acceptor; specific for D-alanine role is filled by Lys34. Residue Lys34 is modified to N6-(pyridoxal phosphate)lysine. Arg133 is a substrate binding site. Tyr249 acts as the Proton acceptor; specific for L-alanine in catalysis. Met297 contributes to the substrate binding site.

It belongs to the alanine racemase family. It depends on pyridoxal 5'-phosphate as a cofactor.

The catalysed reaction is L-alanine = D-alanine. It functions in the pathway amino-acid biosynthesis; D-alanine biosynthesis; D-alanine from L-alanine: step 1/1. In terms of biological role, catalyzes the interconversion of L-alanine and D-alanine. May also act on other amino acids. The protein is Alanine racemase (alr) of Rickettsia peacockii (strain Rustic).